Reading from the N-terminus, the 906-residue chain is Cadherin-2 (906 aa).

Residues 1 to 25 (MCRIAGAPRTLLPLLAALLQASVEA) form the signal peptide. The propeptide occupies 26–159 (SGEIALCKTG…HSGHLQRQKR (134 aa)). A phosphoserine mark is found at Ser-96 and Ser-135. Cadherin domains lie at 160-267 (DWVI…RPEF), 268-382 (LHQV…PPEF), 383-497 (TAMT…NPYF), 498-603 (APNP…DNAP), and 604-714 (QVLP…DVDR). Over 160–724 (DWVIPPINLP…IVGAGLGTGA (565 aa)) the chain is Extracellular. Residue Glu-170 participates in Ca(2+) binding. Asn-190 carries an N-linked (GlcNAc...) asparagine glycan. Ca(2+) contacts are provided by Asp-226, Glu-228, Asp-259, Met-260, Asn-261, Asp-262, and Asn-263. An N-linked (GlcNAc...) asparagine glycan is attached at Asn-273. Ca(2+) is bound by residues Asp-293, Asp-295, and Asn-301. Asn-325 carries N-linked (GlcNAc...) asparagine glycosylation. Asp-353 provides a ligand contact to Ca(2+). Residues Asn-402, Asn-572, Asn-622, Asn-651, and Asn-692 are each glycosylated (N-linked (GlcNAc...) asparagine). A helical membrane pass occupies residues 725–745 (IIAILLCIIILLILVLMFVVW). Residues 746 to 906 (MKRRDKERQA…LADMYGGGDD (161 aa)) lie on the Cytoplasmic side of the membrane. The segment covering 863-880 (SGSTAGSLSSLNSSSSGG) has biased composition (low complexity). The segment at 863 to 884 (SGSTAGSLSSLNSSSSGGEQDY) is disordered.

Homodimer (via extracellular region). Can also form heterodimers with other cadherins (via extracellular region). Dimerization occurs in trans, i.e. with a cadherin chain from another cell. Interacts with CDCP1. Interacts with PCDH8; this complex may also include TAOK2. The interaction with PCDH8 may lead to internalization through TAOK2/p38 MAPK pathway. Identified in a complex containing FGFR4, NCAM1, CDH2, PLCG1, FRS2, SRC, SHC1, GAP43 and CTTN. May interact with OBSCN (via protein kinase domain 2). Interacts with FBXO45. Cleaved by MMP24. Ectodomain cleavage leads to the generation of a soluble 90 kDa N-terminal soluble fragment and a 45 kDa membrane-bound C-terminal fragment 1 (CTF1), which is further cleaved by gamma-secretase into a 35 kDa. Cleavage in neural stem cells by MMP24 affects CDH2-mediated anchorage of neural stem cells to ependymocytes in the adult subependymal zone, leading to modulate neural stem cell quiescence.

The protein localises to the cell membrane. It localises to the sarcolemma. Its subcellular location is the cell junction. The protein resides in the cell surface. It is found in the desmosome. The protein localises to the adherens junction. Its function is as follows. Calcium-dependent cell adhesion protein; preferentially mediates homotypic cell-cell adhesion by dimerization with a CDH2 chain from another cell. Cadherins may thus contribute to the sorting of heterogeneous cell types. Acts as a regulator of neural stem cells quiescence by mediating anchorage of neural stem cells to ependymocytes in the adult subependymal zone: upon cleavage by MMP24, CDH2-mediated anchorage is affected, leading to modulate neural stem cell quiescence. Plays a role in cell-to-cell junction formation between pancreatic beta cells and neural crest stem (NCS) cells, promoting the formation of processes by NCS cells. Required for proper neurite branching. Required for pre- and postsynaptic organization. CDH2 may be involved in neuronal recognition mechanism. In hippocampal neurons, may regulate dendritic spine density. This Callithrix jacchus (White-tufted-ear marmoset) protein is Cadherin-2 (CDH2).